Here is a 150-residue protein sequence, read N- to C-terminus: Large ribosomal subunit protein bL9 (150 aa).

The protein belongs to the bacterial ribosomal protein bL9 family.

In terms of biological role, binds to the 23S rRNA. The polypeptide is Large ribosomal subunit protein bL9 (Vibrio parahaemolyticus serotype O3:K6 (strain RIMD 2210633)).